The following is a 303-amino-acid chain: UDP-3-O-acyl-N-acetylglucosamine deacetylase (303 aa).

Residues His-78, His-237, and Asp-241 each contribute to the Zn(2+) site. His-264 (proton donor) is an active-site residue.

Belongs to the LpxC family. Zn(2+) serves as cofactor.

It carries out the reaction a UDP-3-O-[(3R)-3-hydroxyacyl]-N-acetyl-alpha-D-glucosamine + H2O = a UDP-3-O-[(3R)-3-hydroxyacyl]-alpha-D-glucosamine + acetate. Its pathway is glycolipid biosynthesis; lipid IV(A) biosynthesis; lipid IV(A) from (3R)-3-hydroxytetradecanoyl-[acyl-carrier-protein] and UDP-N-acetyl-alpha-D-glucosamine: step 2/6. Catalyzes the hydrolysis of UDP-3-O-myristoyl-N-acetylglucosamine to form UDP-3-O-myristoylglucosamine and acetate, the committed step in lipid A biosynthesis. This chain is UDP-3-O-acyl-N-acetylglucosamine deacetylase, found in Azotobacter vinelandii (strain DJ / ATCC BAA-1303).